Consider the following 1376-residue polypeptide: Ubiquitin carboxyl-terminal hydrolase 47 (1376 aa).

Lys122 is subject to N6-acetyllysine. Residues Val188–Lys564 form the USP domain. Cys197 functions as the Nucleophile in the catalytic mechanism. The segment at Glu426 to Asn452 is disordered. The segment covering Gln430–Asn452 has biased composition (polar residues). The active-site Proton acceptor is the His503. Residue Ser832 is modified to Phosphoserine. 3 disordered regions span residues Ser835–Ala863, Leu880–Thr971, and Gly985–Lys1025. The span at Ser882–Ser900 shows a compositional bias: low complexity. 2 positions are modified to phosphoserine: Ser911 and Ser934. Residues His930 to Phe939 show a composition bias toward polar residues. Over residues Ser941–Asn951 the composition is skewed to basic and acidic residues. The segment covering Ser954–Asp970 has biased composition (low complexity). Residues Lys998–Trp1007 show a composition bias toward basic and acidic residues. The span at Asp1008–Asp1021 shows a compositional bias: acidic residues. Ser1014 carries the post-translational modification Phosphoserine. Thr1016 carries the phosphothreonine modification. A Phosphoserine modification is found at Ser1018.

Belongs to the peptidase C19 family. USP47 subfamily. As to quaternary structure, interacts with BTRC and FBXW11. Interacts with POLB.

The protein resides in the cytoplasm. It carries out the reaction Thiol-dependent hydrolysis of ester, thioester, amide, peptide and isopeptide bonds formed by the C-terminal Gly of ubiquitin (a 76-residue protein attached to proteins as an intracellular targeting signal).. Its function is as follows. Ubiquitin-specific protease that specifically deubiquitinates monoubiquitinated DNA polymerase beta (POLB), stabilizing POLB thereby playing a role in base-excision repair (BER). Acts as a regulator of cell growth and genome integrity. May also indirectly regulate CDC25A expression at a transcriptional level. The polypeptide is Ubiquitin carboxyl-terminal hydrolase 47 (Usp47) (Mus musculus (Mouse)).